We begin with the raw amino-acid sequence, 507 residues long: ATP synthase subunit alpha, chloroplastic (507 aa).

Residue glycine 170 to threonine 177 participates in ATP binding.

Belongs to the ATPase alpha/beta chains family. In terms of assembly, F-type ATPases have 2 components, CF(1) - the catalytic core - and CF(0) - the membrane proton channel. CF(1) has five subunits: alpha(3), beta(3), gamma(1), delta(1), epsilon(1). CF(0) has four main subunits: a, b, b' and c.

It is found in the plastid. Its subcellular location is the chloroplast thylakoid membrane. The catalysed reaction is ATP + H2O + 4 H(+)(in) = ADP + phosphate + 5 H(+)(out). Produces ATP from ADP in the presence of a proton gradient across the membrane. The alpha chain is a regulatory subunit. This Panax ginseng (Korean ginseng) protein is ATP synthase subunit alpha, chloroplastic.